Consider the following 471-residue polypeptide: Glutamate--tRNA ligase (471 aa).

The 'HIGH' region signature appears at 9 to 19 (PSPTGYLHVGG). The Zn(2+) site is built by C98, C100, C125, and H127. Positions 237-241 (KLSKR) match the 'KMSKS' region motif. Residue K240 coordinates ATP.

This sequence belongs to the class-I aminoacyl-tRNA synthetase family. Glutamate--tRNA ligase type 1 subfamily. As to quaternary structure, monomer. Requires Zn(2+) as cofactor.

The protein resides in the cytoplasm. It carries out the reaction tRNA(Glu) + L-glutamate + ATP = L-glutamyl-tRNA(Glu) + AMP + diphosphate. In terms of biological role, catalyzes the attachment of glutamate to tRNA(Glu) in a two-step reaction: glutamate is first activated by ATP to form Glu-AMP and then transferred to the acceptor end of tRNA(Glu). In Escherichia coli O1:K1 / APEC, this protein is Glutamate--tRNA ligase.